We begin with the raw amino-acid sequence, 601 residues long: ATP-dependent rRNA helicase SPB4 (601 aa).

The Q motif signature appears at 14-42; sequence LAWSQASLQPWIHDAIDSLGFRSMTPVQA. Residues 45–228 form the Helicase ATP-binding domain; sequence IPLFCGNKDV…RTGMSNPVKI (184 aa). 58 to 65 is a binding site for ATP; the sequence is AVTGSGKT. The DEAD box motif lies at 176–179; it reads DEAD. The 163-residue stretch at 257 to 419 folds into the Helicase C-terminal domain; the sequence is VLINMLSTLQ…AYKAFSKNLR (163 aa). Residues 507 to 575 are a coiled coil; it reads KEKIRLETME…QIMNESSDEE (69 aa). The segment covering 532-554 has biased composition (basic and acidic residues); the sequence is LKVKNEAWSSKNEKKEGKQERRE. Residues 532-576 are disordered; it reads LKVKNEAWSSKNEKKEGKQERREKMKRKREAIEKQIMNESSDEET.

It belongs to the DEAD box helicase family. DDX55/SPB4 subfamily. In terms of assembly, component of pre-60S ribosomal complexes.

Its subcellular location is the nucleus. The protein resides in the nucleolus. The enzyme catalyses ATP + H2O = ADP + phosphate + H(+). Functionally, ATP-binding RNA helicase involved in the biogenesis of 60S ribosomal subunits. Binds 90S pre-ribosomal particles and dissociates from pre-60S ribosomal particles after processing of 27SB pre-rRNA. Required for the normal formation of 18S rRNA through the processing of pre-rRNAs at sites A0, A1 and A2, and the normal formation of 25S and 5.8S rRNAs through the processing of pre-rRNAs at sites C1 and C2. This is ATP-dependent rRNA helicase SPB4 from Meyerozyma guilliermondii (strain ATCC 6260 / CBS 566 / DSM 6381 / JCM 1539 / NBRC 10279 / NRRL Y-324) (Yeast).